Consider the following 399-residue polypeptide: Phosphoglycerate kinase (399 aa).

Substrate is bound by residues 22-24 (DLN), R37, 60-63 (HFGR), R119, and R152. ATP-binding positions include K202, E324, and 354–357 (GGDT).

It belongs to the phosphoglycerate kinase family. Monomer.

The protein resides in the cytoplasm. It carries out the reaction (2R)-3-phosphoglycerate + ATP = (2R)-3-phospho-glyceroyl phosphate + ADP. The protein operates within carbohydrate degradation; glycolysis; pyruvate from D-glyceraldehyde 3-phosphate: step 2/5. This is Phosphoglycerate kinase from Rhizobium meliloti (strain 1021) (Ensifer meliloti).